Here is a 148-residue protein sequence, read N- to C-terminus: Large ribosomal subunit protein uL22 (148 aa).

Belongs to the universal ribosomal protein uL22 family. In terms of assembly, part of the 50S ribosomal subunit.

This protein binds specifically to 23S rRNA; its binding is stimulated by other ribosomal proteins, e.g. L4, L17, and L20. It is important during the early stages of 50S assembly. It makes multiple contacts with different domains of the 23S rRNA in the assembled 50S subunit and ribosome. In terms of biological role, the globular domain of the protein is located near the polypeptide exit tunnel on the outside of the subunit, while an extended beta-hairpin is found that lines the wall of the exit tunnel in the center of the 70S ribosome. The polypeptide is Large ribosomal subunit protein uL22 (Thermosipho africanus (strain TCF52B)).